The sequence spans 593 residues: Arylsulfatase D (593 aa).

A signal peptide spans 1–33 (MRSAARRGRAAPAARDSLPVLLFLCLLLKTCEP). 2 residues coordinate Ca(2+): D49 and D50. N61 is a glycosylation site (N-linked (GlcNAc...) asparagine). C89 is a binding site for Ca(2+). Catalysis depends on C89, which acts as the Nucleophile. C89 is modified (3-oxoalanine (Cys)). An N-linked (GlcNAc...) asparagine glycan is attached at N128. K148 is a substrate binding site. Residue H150 is part of the active site. Substrate is bound at residue H304. N-linked (GlcNAc...) asparagine glycosylation is present at N347. Ca(2+) is bound by residues D356 and H357. Residue K381 participates in substrate binding.

This sequence belongs to the sulfatase family. It depends on Ca(2+) as a cofactor. Post-translationally, the conversion to 3-oxoalanine (also known as C-formylglycine, FGly), of a serine or cysteine residue in prokaryotes and of a cysteine residue in eukaryotes, is critical for catalytic activity. Expressed in the pancreas, kidney, liver, lung, placenta, brain and heart.

It is found in the lysosome. The sequence is that of Arylsulfatase D (ARSD) from Homo sapiens (Human).